We begin with the raw amino-acid sequence, 262 residues long: MQTIIRVEKLAKTFNQHQALHAVALNIHHGEMVALLGPSGSGKSTLLRHLSGLITGDKSAGSHIELLGRTVQREGRLARDIRKSRANTGYIFQQFNLVNRLSVLENVLIGALGSTPFWRTCFSWFTREQKQRALQALTRVGMVHFAHQRVSTLSGGQQQRVAIARALMQQAKVILADEPIASLDPESARIVMDTLRDINQNDGITVVVTLHQVDYALRYCERIVALRQGHVFYDGSSQQFDNERFDHLYRSINRIEENAKAA.

The ABC transporter domain maps to 5–253; it reads IRVEKLAKTF…RFDHLYRSIN (249 aa). 37–44 provides a ligand contact to ATP; it reads GPSGSGKS.

Belongs to the ABC transporter superfamily. Phosphonates importer (TC 3.A.1.9.1) family. The complex is composed of two ATP-binding proteins (PhnC), two transmembrane proteins (PhnE) and a solute-binding protein (PhnD).

It is found in the cell inner membrane. It catalyses the reaction phosphonate(out) + ATP + H2O = phosphonate(in) + ADP + phosphate + H(+). In terms of biological role, part of the ABC transporter complex PhnCDE involved in phosphonates import. Responsible for energy coupling to the transport system. In Shigella sonnei (strain Ss046), this protein is Phosphonates import ATP-binding protein PhnC.